Consider the following 293-residue polypeptide: Undecaprenyl-diphosphatase (293 aa).

8 helical membrane-spanning segments follow: residues 3–23 (IALA…EFLP), 43–63 (KGKI…CWEF), 85–105 (ANVV…GKWI), 109–129 (LFNP…ILLA), 178–198 (FALV…MLFG), 203–223 (VATE…TVYE), 238–258 (IFAV…RWLL), and 269–289 (FAWY…SGLV).

Belongs to the UppP family.

It localises to the cell inner membrane. The catalysed reaction is di-trans,octa-cis-undecaprenyl diphosphate + H2O = di-trans,octa-cis-undecaprenyl phosphate + phosphate + H(+). In terms of biological role, catalyzes the dephosphorylation of undecaprenyl diphosphate (UPP). Confers resistance to bacitracin. This chain is Undecaprenyl-diphosphatase, found in Cupriavidus necator (strain ATCC 17699 / DSM 428 / KCTC 22496 / NCIMB 10442 / H16 / Stanier 337) (Ralstonia eutropha).